The following is a 360-amino-acid chain: NAD(P)H-quinone oxidoreductase subunit 1, chloroplastic (360 aa).

The next 9 membrane-spanning stretches (helical) occupy residues 27 to 47, 98 to 118, 129 to 149, 165 to 185, 203 to 223, 248 to 268, 269 to 289, 297 to 317, and 340 to 360; these read IWIF…VLVI, FSIG…VIPF, IGIF…LMSG, AAQS…ISLL, FWGW…ISSL, YSGI…LISS, LFVT…ISIL, IFGT…FLFI, and FLLP…LFSL.

The protein belongs to the complex I subunit 1 family. In terms of assembly, NDH is composed of at least 16 different subunits, 5 of which are encoded in the nucleus.

It is found in the plastid. The protein resides in the chloroplast thylakoid membrane. It carries out the reaction a plastoquinone + NADH + (n+1) H(+)(in) = a plastoquinol + NAD(+) + n H(+)(out). The enzyme catalyses a plastoquinone + NADPH + (n+1) H(+)(in) = a plastoquinol + NADP(+) + n H(+)(out). In terms of biological role, NDH shuttles electrons from NAD(P)H:plastoquinone, via FMN and iron-sulfur (Fe-S) centers, to quinones in the photosynthetic chain and possibly in a chloroplast respiratory chain. The immediate electron acceptor for the enzyme in this species is believed to be plastoquinone. Couples the redox reaction to proton translocation, and thus conserves the redox energy in a proton gradient. The chain is NAD(P)H-quinone oxidoreductase subunit 1, chloroplastic from Nasturtium officinale (Watercress).